We begin with the raw amino-acid sequence, 945 residues long: Collagen-like protein 1 (945 aa).

Disordered stretches follow at residues 80-226 (SLKG…SPDL) and 257-441 (GEKG…DKGE). Collagen-like domains follow at residues 83–142 (GDPG…QGDK) and 146–205 (GDVG…KGDK). Basic and acidic residues-rich tracts occupy residues 109–145 (QGTK…KGDQ) and 168–208 (DQGD…KGDK). The N-linked (GlcNAc...) asparagine; by host glycan is linked to Asn211. Collagen-like domains are found at residues 257 to 376 (GEKG…KGDK), 383 to 442 (GDKG…KGEN), 488 to 547 (GEKG…VGDK), 554 to 613 (GDKG…KGDV), and 635 to 694 (GDKG…VGAS). N-linked (GlcNAc...) asparagine; by host glycosylation occurs at Asn442. Residues 488 to 687 (GEKGDKGDTG…DKGDKGDKGD (200 aa)) are compositionally biased toward basic and acidic residues. Positions 488-712 (GEKGDKGDTG…SPTTGENGDS (225 aa)) are disordered. Positions 703–712 (SPTTGENGDS) are enriched in polar residues. Asn716 carries N-linked (GlcNAc...) asparagine; by host glycosylation. Positions 733–768 (TNIKGDKGDKGDKGDKGDKGDTGDVGLKGDTGTPGS) are disordered. Positions 736 to 754 (KGDKGDKGDKGDKGDKGDT) are enriched in basic and acidic residues. Positions 756-765 (DVGLKGDTGT) are enriched in low complexity.

Post-translationally, may be hydroxylated on lysine by the viral-encoded procollagen-lysine,2-oxoglutarate 5-dioxygenase.

It is found in the virion. Functionally, may participate in the formation of a layer of cross-linked glycosylated fibrils at the viral surface thus giving it a hairy-like appearance. The polypeptide is Collagen-like protein 1 (Acanthamoeba polyphaga mimivirus (APMV)).